A 363-amino-acid polypeptide reads, in one-letter code: Type-2 angiotensin II receptor (363 aa).

Residues Met-1–Asp-45 lie on the Extracellular side of the membrane. 5 N-linked (GlcNAc...) asparagine glycosylation sites follow: Asn-4, Asn-13, Asn-24, Asn-29, and Asn-34. Disulfide bonds link Cys-35-Cys-290 and Cys-117-Cys-195. The chain crosses the membrane as a helical span at residues Ala-46–Cys-70. Topologically, residues Cys-71–Ser-80 are cytoplasmic. The chain crosses the membrane as a helical span at residues Ile-81 to Tyr-104. Positions 103 and 104 each coordinate angiotensin II. Residues Ser-105–Pro-114 lie on the Extracellular side of the membrane. Residues Val-115–Val-140 traverse the membrane as a helical segment. The Cytoplasmic portion of the chain corresponds to Asp-141–Gln-159. The helical transmembrane segment at Ala-160 to Phe-181 threads the bilayer. Angiotensin II is bound by residues Arg-182, Tyr-204, and Lys-215. The Extracellular segment spans residues Arg-182–Gln-206. The chain crosses the membrane as a helical span at residues Trp-207–Phe-232. At Gly-233–Met-257 the chain is on the cytoplasmic side. Residues Ala-258–Leu-281 traverse the membrane as a helical segment. Asp-279 provides a ligand contact to angiotensin II. Residues Ala-282–Ala-294 lie on the Extracellular side of the membrane. A helical transmembrane segment spans residues Val-295–Phe-320. An angiotensin II-binding site is contributed by Asp-297. Over Val-321–Ser-363 the chain is Cytoplasmic. The tract at residues Arg-324–Phe-333 is helix VIII.

The protein belongs to the G-protein coupled receptor 1 family. In terms of assembly, interacts with MTUS1. As to expression, in adult, highly expressed in myometrium with lower levels in adrenal gland and fallopian tube. Expressed in the cerebellum. Very highly expressed in fetal kidney and intestine.

It is found in the cell membrane. Functionally, receptor for angiotensin II, a vasoconstricting peptide. Signals primarily via a non-canonical G-protein- and beta-arrestin independent pathways. Cooperates with MTUS1 to inhibit ERK2 activation and cell proliferation. This Homo sapiens (Human) protein is Type-2 angiotensin II receptor.